Reading from the N-terminus, the 205-residue chain is HTH-type transcriptional repressor KstR2 (205 aa).

Residues 10 to 70 form the HTH tetR-type domain; sequence ASRRDELLQL…EVLRDFLDWL (61 aa). Residues 33 to 52 constitute a DNA-binding region (H-T-H motif); the sequence is TVRDIADSAGILSGSLYHHF.

Homodimer.

In terms of biological role, controls the expression of a small regulon that may play a role in the utilization of cholesterol. The protein is HTH-type transcriptional repressor KstR2 (kstR2) of Mycolicibacterium smegmatis (strain ATCC 700084 / mc(2)155) (Mycobacterium smegmatis).